Here is a 325-residue protein sequence, read N- to C-terminus: Biotin synthase (325 aa).

One can recognise a Radical SAM core domain in the interval 51–280; it reads FMGRKADLCT…NVYIRYAGGR (230 aa). Positions 69, 73, and 76 each coordinate [4Fe-4S] cluster. Positions 113, 145, 205, and 275 each coordinate [2Fe-2S] cluster.

The protein belongs to the radical SAM superfamily. Biotin synthase family. As to quaternary structure, homodimer. The cofactor is [4Fe-4S] cluster. [2Fe-2S] cluster is required as a cofactor.

The enzyme catalyses (4R,5S)-dethiobiotin + (sulfur carrier)-SH + 2 reduced [2Fe-2S]-[ferredoxin] + 2 S-adenosyl-L-methionine = (sulfur carrier)-H + biotin + 2 5'-deoxyadenosine + 2 L-methionine + 2 oxidized [2Fe-2S]-[ferredoxin]. Its pathway is cofactor biosynthesis; biotin biosynthesis; biotin from 7,8-diaminononanoate: step 2/2. In terms of biological role, catalyzes the conversion of dethiobiotin (DTB) to biotin by the insertion of a sulfur atom into dethiobiotin via a radical-based mechanism. The protein is Biotin synthase of Clostridioides difficile (strain 630) (Peptoclostridium difficile).